A 446-amino-acid chain; its full sequence is MVLYRRWGTEKDFVSTYTSSIDSDKEIVEEVKVVMKAHVIELYLSGYITKDTAKRILLAINSFHELKEGYEDIHEALEDHIIKTVGEEGGWVGFGRSRNDHVATALRLKMRKYLIEILYDIISLRKTLIEKSKTSTEILFPTYTHFQPAQPSTLAHYFLYIEDELDTIWNYIYSSLLLVNRSPLGSGAIVGTNVKLDRKREAELLGFDDIIYNTISATSSRLDLINAVSNLSLLMLFFSRIAEDLILLSSMFINIVKLPDSHVSTSSLMPQKRNAVTLEILRSKAGECFGDLSSLFNIYKGLPSGYNLDLQEMNKHYWDCVKIVNSSIEVINSILEGIEVLNFQLDDKTTATDVAEDLAITGIPYRKAYMEVANKIRAGTFISEISPKTSIYKKAVIGSPNPELINEEIKIKENRIAEEESKLKKYEEKIIGKMNELKVIEDDLIL.

The protein belongs to the lyase 1 family. Argininosuccinate lyase subfamily.

It is found in the cytoplasm. The catalysed reaction is 2-(N(omega)-L-arginino)succinate = fumarate + L-arginine. Its pathway is amino-acid biosynthesis; L-arginine biosynthesis; L-arginine from L-ornithine and carbamoyl phosphate: step 3/3. This Sulfurisphaera tokodaii (strain DSM 16993 / JCM 10545 / NBRC 100140 / 7) (Sulfolobus tokodaii) protein is Argininosuccinate lyase.